The primary structure comprises 49 residues: U1-theraphotoxin-Lp1b (49 aa).

Intrachain disulfides connect Cys-4-Cys-17, Cys-8-Cys-41, Cys-22-Cys-24, and Cys-35-Cys-46.

As to expression, expressed by the venom gland.

The protein localises to the secreted. Its function is as follows. Toxin that causes irreversible contractile paralysis into adult Aedes aegypti resulting in 100% mortality after 24 hours. This chain is U1-theraphotoxin-Lp1b, found in Lasiodora parahybana (Brazilian salmon pink birdeater).